The sequence spans 584 residues: High-affinity choline transporter 1 (584 aa).

The Extracellular portion of the chain corresponds to 1–6 (MTVHID). The helical transmembrane segment at 7–27 (GIVAIVLFYLLILFVGLWAAW) threads the bilayer. Over 28 to 50 (KSKNTSMEGAMDRSEAIMIGGRD) the chain is Cytoplasmic. Residues 51 to 71 (IGLLVGGFTMTATWVGGGYIN) traverse the membrane as a helical segment. The Extracellular portion of the chain corresponds to 72–83 (GTAEAVYVPGYG). Residues 84 to 104 (LAWAQAPFGYALSLVIGGLFF) traverse the membrane as a helical segment. Residues 105 to 127 (AKPMRSRGYVTMLDPFQQMYGKR) lie on the Cytoplasmic side of the membrane. The chain crosses the membrane as a helical span at residues 128–148 (MGGLLFIPALLGEIFWSAAIL). Topologically, residues 149–166 (SALGATLSVIVDININVS) are extracellular. A helical transmembrane segment spans residues 167-187 (VVVSAVIAVLYTLVGGLYSVA). Over 188–193 (YTDVVQ) the chain is Cytoplasmic. A helical transmembrane segment spans residues 194–214 (LFCIFLGLWISIPFALLNPAV). Topologically, residues 215–239 (TDIIVTANQEVYQEPWVGNIQSKDS) are extracellular. Residues 240 to 260 (LIWIDNFLLLMLGGIPWQVYF) form a helical membrane-spanning segment. Residues 261–276 (QRVLSASSATYAQVLS) lie on the Cytoplasmic side of the membrane. Residues 277 to 297 (FLAAFGCVLMAIPSVLIGAIG) form a helical membrane-spanning segment. Topologically, residues 298–319 (TSTDWNQTSYGLPGPIGKNETD) are extracellular. Asn-303 is a glycosylation site (N-linked (GlcNAc...) asparagine). A helical transmembrane segment spans residues 320–340 (MILPIVLQHLCPPYISFFGLG). Residues 341-378 (AVSAAVMSSADSSILSASSMFARNIYHLAFRQEASDKE) lie on the Cytoplasmic side of the membrane. A helical membrane pass occupies residues 379–399 (IVWVMRITIFLFGGAATSMAL). Topologically, residues 400–408 (LAQSIYGLW) are extracellular. A helical transmembrane segment spans residues 409 to 429 (YLSSDLVYVIIFPQLISVLFV). Residues 430 to 437 (KGTNTYGS) lie on the Cytoplasmic side of the membrane. Residues 438 to 458 (IAGYIIGFLLRISGGEPYLHM) traverse the membrane as a helical segment. The Extracellular portion of the chain corresponds to 459–487 (QPFIYYPGCYLDHSFGDDPVYVQRFPFKT). The helical transmembrane segment at 488-508 (MAMLFSFLGNTGVSYLVKYLF) threads the bilayer. The Cytoplasmic segment spans residues 509 to 584 (VSGILPPKLD…NPELSKSGND (76 aa)).

The protein belongs to the sodium:solute symporter (SSF) (TC 2.A.21) family. In terms of processing, phosphorylated. Specific for cholinergic neurons.

Its subcellular location is the membrane. Its function is as follows. Imports choline from the extracellular space to the neuron with high affinity. Rate-limiting step in acetylcholine synthesis. Sodium ion and chloride ion dependent. In Torpedo marmorata (Marbled electric ray), this protein is High-affinity choline transporter 1 (CHT1).